The chain runs to 309 residues: MTNSLYQKHIISIPELSRQELELIVETAGKIKKEPQPDLLKNKIVASCFFEASTRTRLSFETAIQRLGGSVIGFDTAGNTSLAQKGETLADSVQIITSYADAYVMRHPQEGAARLASEFSNGTPVINAGDGANQHPTQTLLDLYTIYETQGRLDNLNVAFVGDLKYGRTVHSLTQALAKFEGIKFFFIAPEVLAMPDYICEELDELGIEYQLVESMDDAIPELDILYMTRVQKERFDESEYAHIKSAYILSAENLQPARENLKVLHPLPRVDEIDTDVDATPHAYYFQQAENGVYARQALLALVLNETL.

Carbamoyl phosphate-binding residues include Arg55 and Thr56. An L-aspartate-binding site is contributed by Lys85. Residues Arg106, His135, and Gln138 each contribute to the carbamoyl phosphate site. L-aspartate is bound by residues Arg168 and Arg230. Residues Leu268 and Pro269 each coordinate carbamoyl phosphate.

It belongs to the aspartate/ornithine carbamoyltransferase superfamily. ATCase family. Heterododecamer (2C3:3R2) of six catalytic PyrB chains organized as two trimers (C3), and six regulatory PyrI chains organized as three dimers (R2).

The catalysed reaction is carbamoyl phosphate + L-aspartate = N-carbamoyl-L-aspartate + phosphate + H(+). The protein operates within pyrimidine metabolism; UMP biosynthesis via de novo pathway; (S)-dihydroorotate from bicarbonate: step 2/3. In terms of biological role, catalyzes the condensation of carbamoyl phosphate and aspartate to form carbamoyl aspartate and inorganic phosphate, the committed step in the de novo pyrimidine nucleotide biosynthesis pathway. The polypeptide is Aspartate carbamoyltransferase catalytic subunit (Aliivibrio fischeri (strain ATCC 700601 / ES114) (Vibrio fischeri)).